The following is a 999-amino-acid chain: Helicase required for RNAi-mediated heterochromatin assembly 1 (999 aa).

A disordered region spans residues 61–90 (EQIETSETSKTQDSEGNKVDKNLKENKSIR). The segment covering 70 to 88 (KTQDSEGNKVDKNLKENKS) has biased composition (basic and acidic residues). Ser94 carries the phosphoserine modification. A compositionally biased stretch (basic and acidic residues) spans 106–124 (RNDITSGKNREFENEHHPA). The interval 106–131 (RNDITSGKNREFENEHHPASDTSSWR) is disordered. Position 393–400 (393–400 (GPPGTGKS)) interacts with ATP.

Cid12, hrr1 and rdp1 interact forming the RNA-directed RNA polymerase complex (RDRC). The RDRC complex interacts with the RITS complex via interaction between ago1 and hrr1. Clr4 has a role in mediating this interaction.

The protein localises to the cytoplasm. It is found in the nucleus. It catalyses the reaction ATP + H2O = ADP + phosphate + H(+). Functionally, has a role in the RNA interference (RNAi) pathway which is important for heterochromatin formation and accurate chromosome segregation. A member of the RNA-directed RNA polymerase complex (RDRC) which is involved in the generation of small interfering RNAs (siRNAs) and mediate their association with the RNA-induced transcriptional silencing (RITS) complex. RITS acts as a priming complex for dsRNA synthesis at the site of non-coding centromeric RNA. This chain is Helicase required for RNAi-mediated heterochromatin assembly 1 (hrr1), found in Schizosaccharomyces pombe (strain 972 / ATCC 24843) (Fission yeast).